A 581-amino-acid chain; its full sequence is Proline--tRNA ligase (581 aa).

Belongs to the class-II aminoacyl-tRNA synthetase family. ProS type 1 subfamily. In terms of assembly, homodimer.

Its subcellular location is the cytoplasm. It carries out the reaction tRNA(Pro) + L-proline + ATP = L-prolyl-tRNA(Pro) + AMP + diphosphate. Its function is as follows. Catalyzes the attachment of proline to tRNA(Pro) in a two-step reaction: proline is first activated by ATP to form Pro-AMP and then transferred to the acceptor end of tRNA(Pro). As ProRS can inadvertently accommodate and process non-cognate amino acids such as alanine and cysteine, to avoid such errors it has two additional distinct editing activities against alanine. One activity is designated as 'pretransfer' editing and involves the tRNA(Pro)-independent hydrolysis of activated Ala-AMP. The other activity is designated 'posttransfer' editing and involves deacylation of mischarged Ala-tRNA(Pro). The misacylated Cys-tRNA(Pro) is not edited by ProRS. The sequence is that of Proline--tRNA ligase from Chlamydia trachomatis serovar D (strain ATCC VR-885 / DSM 19411 / UW-3/Cx).